We begin with the raw amino-acid sequence, 451 residues long: Glucose-6-phosphate isomerase (451 aa).

Phosphothreonine is present on T38. The active-site Proton donor is the E290. Catalysis depends on residues H311 and K425.

It belongs to the GPI family.

It localises to the cytoplasm. The enzyme catalyses alpha-D-glucose 6-phosphate = beta-D-fructose 6-phosphate. Its pathway is carbohydrate biosynthesis; gluconeogenesis. The protein operates within carbohydrate degradation; glycolysis; D-glyceraldehyde 3-phosphate and glycerone phosphate from D-glucose: step 2/4. Its function is as follows. Catalyzes the reversible isomerization of glucose-6-phosphate to fructose-6-phosphate. The sequence is that of Glucose-6-phosphate isomerase from Shouchella clausii (strain KSM-K16) (Alkalihalobacillus clausii).